The primary structure comprises 174 residues: MLPSTNDKQLIEVEEGTKIIKGSNVIITTLDKVVNWGRSNSLWPLTFGLACCAIEMMAAGASHLDLDRFGILFRASPRQADVIIIAGTVTYKMAPIVKRVYDQMPEPKYVIAMGSCACTGGIFNTYSTVQGADQFLPVDVYVPGCPPRPEALMYGVLKLKEKIMREEGRWGRLK.

The [4Fe-4S] cluster site is built by C51, C52, C116, and C145.

This sequence belongs to the complex I 20 kDa subunit family. In terms of assembly, NDH-1 is composed of 14 different subunits. Subunits NuoB, C, D, E, F, and G constitute the peripheral sector of the complex. Requires [4Fe-4S] cluster as cofactor.

It is found in the cell inner membrane. It carries out the reaction a quinone + NADH + 5 H(+)(in) = a quinol + NAD(+) + 4 H(+)(out). In terms of biological role, NDH-1 shuttles electrons from NADH, via FMN and iron-sulfur (Fe-S) centers, to quinones in the respiratory chain. The immediate electron acceptor for the enzyme in this species is believed to be ubiquinone. Couples the redox reaction to proton translocation (for every two electrons transferred, four hydrogen ions are translocated across the cytoplasmic membrane), and thus conserves the redox energy in a proton gradient. The chain is NADH-quinone oxidoreductase subunit B 2 from Thermodesulfovibrio yellowstonii (strain ATCC 51303 / DSM 11347 / YP87).